The primary structure comprises 236 residues: Thiamine import ATP-binding protein ThiQ (236 aa).

One can recognise an ABC transporter domain in the interval 2–230 (LKLEKITYLY…SAAKASVLGI (229 aa)). 32–39 (GPSGAGKS) is an ATP binding site.

Belongs to the ABC transporter superfamily. Thiamine importer (TC 3.A.1.19.1) family. As to quaternary structure, the complex is composed of two ATP-binding proteins (ThiQ), two transmembrane proteins (ThiP) and a solute-binding protein (ThiB).

The protein localises to the cell inner membrane. It carries out the reaction thiamine(out) + ATP + H2O = thiamine(in) + ADP + phosphate + H(+). Its function is as follows. Part of the ABC transporter complex ThiBPQ involved in thiamine import. Responsible for energy coupling to the transport system. In Yersinia pestis bv. Antiqua (strain Antiqua), this protein is Thiamine import ATP-binding protein ThiQ.